The sequence spans 405 residues: Scramblase ANY1 (405 aa).

Topologically, residues Met-1–Phe-51 are cytoplasmic. Residues Ile-52 to Ile-72 form a helical membrane-spanning segment. Residues Glu-73–Lys-76 lie on the Lumenal side of the membrane. The chain crosses the membrane as a helical span at residues Thr-77–Ile-97. Residues Ser-98–Thr-103 are Cytoplasmic-facing. A helical transmembrane segment spans residues Pro-104–Leu-124. Over Arg-125–Ser-177 the chain is Lumenal. A helical transmembrane segment spans residues Leu-178 to Ile-198. Residues Leu-199 to Arg-223 lie on the Cytoplasmic side of the membrane. A helical membrane pass occupies residues Phe-224–Asn-244. Residues Trp-245 to Ser-254 are Lumenal-facing. One can recognise a PQ-loop domain in the interval Leu-252 to Asn-309. Residues Ile-255 to Leu-275 form a helical membrane-spanning segment. The Cytoplasmic segment spans residues Tyr-276 to Gly-283. A helical membrane pass occupies residues Phe-284–Gly-306. Residues Ala-307 to Ala-312 lie on the Lumenal side of the membrane. A helical transmembrane segment spans residues Leu-313–Tyr-335. Topologically, residues Arg-336–Leu-405 are cytoplasmic. The tract at residues Leu-379–Leu-405 is disordered. A compositionally biased stretch (polar residues) spans Gly-396–Leu-405.

As to quaternary structure, interacts with NEO1.

The protein resides in the golgi apparatus membrane. It is found in the late endosome membrane. Its function is as follows. Phospholipid scramblase that transports phosphatidylserine (PS) and phosphatidylethalonamine (PE) bidirectionally from one leaflet to the other of the phospholipid bilayer to at least partially collapse the membrane asymmetry established by NEO1 and other flippases. The PS scramblase activity has been disputed. Functions in the trafficking pathway from endosomes to the trans-Golgi network (TGN). The polypeptide is Scramblase ANY1 (Saccharomyces cerevisiae (strain ATCC 204508 / S288c) (Baker's yeast)).